Reading from the N-terminus, the 158-residue chain is Transcription factor BTF3 homolog 4 (158 aa).

Residue K5 is modified to N6-methyllysine. One can recognise an NAC-A/B domain in the interval T33 to L98. At T111 the chain carries Phosphothreonine. The interval Q123–N158 is disordered. Over residues D134–D150 the composition is skewed to acidic residues.

Belongs to the NAC-beta family.

The chain is Transcription factor BTF3 homolog 4 (BTF3L4) from Bos taurus (Bovine).